The primary structure comprises 551 residues: Dihydroxy-acid dehydratase (551 aa).

A Mg(2+)-binding site is contributed by Asp-78. Cys-119 is a [2Fe-2S] cluster binding site. Residues Asp-120 and Lys-121 each coordinate Mg(2+). Lys-121 carries the post-translational modification N6-carboxylysine. Cys-191 lines the [2Fe-2S] cluster pocket. Glu-441 is a binding site for Mg(2+). Residue Ser-467 is the Proton acceptor of the active site.

Belongs to the IlvD/Edd family. In terms of assembly, homodimer. [2Fe-2S] cluster serves as cofactor. The cofactor is Mg(2+).

It carries out the reaction (2R)-2,3-dihydroxy-3-methylbutanoate = 3-methyl-2-oxobutanoate + H2O. The catalysed reaction is (2R,3R)-2,3-dihydroxy-3-methylpentanoate = (S)-3-methyl-2-oxopentanoate + H2O. Its pathway is amino-acid biosynthesis; L-isoleucine biosynthesis; L-isoleucine from 2-oxobutanoate: step 3/4. The protein operates within amino-acid biosynthesis; L-valine biosynthesis; L-valine from pyruvate: step 3/4. In terms of biological role, functions in the biosynthesis of branched-chain amino acids. Catalyzes the dehydration of (2R,3R)-2,3-dihydroxy-3-methylpentanoate (2,3-dihydroxy-3-methylvalerate) into 2-oxo-3-methylpentanoate (2-oxo-3-methylvalerate) and of (2R)-2,3-dihydroxy-3-methylbutanoate (2,3-dihydroxyisovalerate) into 2-oxo-3-methylbutanoate (2-oxoisovalerate), the penultimate precursor to L-isoleucine and L-valine, respectively. The chain is Dihydroxy-acid dehydratase from Pyrococcus abyssi (strain GE5 / Orsay).